The following is a 184-amino-acid chain: MSKHAASSAKRFSLLALGLMFVGGIVFVWAVDFGIKTTNTLEFCTSCHTMQTNFEEYKESLHYKNTSGVQATCADCHVPKELGPKLVTKIVAAKDVYHEVMGTIDTPEKFEARRWYLANLVWKRLEASDSRECRSCHDYADMDLSEQSRSARSRHSAAQDKGQTCIECHKGVAHHEPTEPDDAS.

At 1 to 14 (MSKHAASSAKRFSL) the chain is on the cytoplasmic side. A helical transmembrane segment spans residues 15–35 (LALGLMFVGGIVFVWAVDFGI). Residues 36–184 (KTTNTLEFCT…HEPTEPDDAS (149 aa)) are Periplasmic-facing. Heme-binding residues include Cys44, Cys47, Met50, Cys73, Cys76, and His77. Residues Lys89 and Asp95 each contribute to the substrate site. Heme is bound by residues Asp95, Cys133, Cys136, His137, Cys165, Cys168, His169, and His174.

It belongs to the NapC/NirT/NrfH family. Binds 4 heme groups per subunit.

It localises to the cell inner membrane. This chain is Putative tetraheme cytochrome-c type, found in Allochromatium vinosum (strain ATCC 17899 / DSM 180 / NBRC 103801 / NCIMB 10441 / D) (Chromatium vinosum).